The primary structure comprises 132 residues: Small ribosomal subunit protein uS9 (132 aa).

This sequence belongs to the universal ribosomal protein uS9 family.

The polypeptide is Small ribosomal subunit protein uS9 (Blochmanniella pennsylvanica (strain BPEN)).